The primary structure comprises 888 residues: Phosphoenolpyruvate carboxylase (888 aa).

Active-site residues include His144 and Lys553.

Belongs to the PEPCase type 1 family. Mg(2+) is required as a cofactor.

It carries out the reaction oxaloacetate + phosphate = phosphoenolpyruvate + hydrogencarbonate. Its function is as follows. Forms oxaloacetate, a four-carbon dicarboxylic acid source for the tricarboxylic acid cycle. The polypeptide is Phosphoenolpyruvate carboxylase (Alcanivorax borkumensis (strain ATCC 700651 / DSM 11573 / NCIMB 13689 / SK2)).